The chain runs to 466 residues: uncharacterized protein (466 aa).

The 289-residue stretch at 178–466 folds into the Autotransporter domain; the sequence is SQGSASSMWM…QGMLGVKYSW (289 aa).

This is an uncharacterized protein from Escherichia coli (strain K12).